The following is a 92-amino-acid chain: Small ribosomal subunit protein uS19 (92 aa).

This sequence belongs to the universal ribosomal protein uS19 family.

Functionally, protein S19 forms a complex with S13 that binds strongly to the 16S ribosomal RNA. The sequence is that of Small ribosomal subunit protein uS19 from Vibrio atlanticus (strain LGP32) (Vibrio splendidus (strain Mel32)).